The primary structure comprises 90 residues: Small ribosomal subunit protein uS15c (90 aa).

Belongs to the universal ribosomal protein uS15 family. In terms of assembly, part of the 30S ribosomal subunit.

Its subcellular location is the plastid. The protein localises to the chloroplast. This chain is Small ribosomal subunit protein uS15c (rps15-A), found in Ipomoea purpurea (Common morning glory).